Consider the following 584-residue polypeptide: Negative regulator of RAS-cAMP pathway (584 aa).

Thr-25 carries the post-translational modification Phosphothreonine. Disordered stretches follow at residues 95 to 167 (PIKP…STTS), 209 to 279 (PLQS…SKTS), 291 to 320 (SEDE…DDYN), 343 to 366 (NLDS…HDPV), and 381 to 432 (SNSN…SLKT). Composition is skewed to polar residues over residues 114 to 127 (PPTT…TRPM), 229 to 254 (CIDN…SFPQ), and 267 to 278 (NDQNGQLSLSKT). Residues Ser-247 and Ser-276 each carry the phosphoserine modification. Residues 307-320 (FYADEDDEEYDDYN) are compositionally biased toward acidic residues. Residues 343 to 363 (NLDSTKSSVSSANTINSNTSH) show a composition bias toward polar residues. A compositionally biased stretch (low complexity) spans 381–392 (SNSNNHNTAHSE). Polar residues predominate over residues 398–432 (VSPTPQSSHSNIGPQPQQNPPSANGIKQQKPSLKT). Ser-442 carries the phosphoserine modification. The residue at position 518 (Ser-518) is a Phosphoserine; by PKA. Residues 551–584 (DNTSIANSNGNGNDDTSNQRTEALGRKTSNGGRI) form a disordered region. Over residues 557-568 (NSNGNGNDDTSN) the composition is skewed to low complexity.

Its subcellular location is the nucleus. In terms of biological role, negative regulator of Ras-cAMP pathway. Involved in transcriptional regulation of galactose-inducible genes. The chain is Negative regulator of RAS-cAMP pathway (MKS1) from Saccharomyces cerevisiae (strain ATCC 204508 / S288c) (Baker's yeast).